The following is a 167-amino-acid chain: NAD(P)H-quinone oxidoreductase subunit I, chloroplastic (167 aa).

4Fe-4S ferredoxin-type domains follow at residues 55–84 (GRIH…VDWK) and 95–124 (LNYS…MTEE). [4Fe-4S] cluster contacts are provided by C64, C67, C70, C74, C104, C107, C110, and C114.

It belongs to the complex I 23 kDa subunit family. NDH is composed of at least 16 different subunits, 5 of which are encoded in the nucleus. [4Fe-4S] cluster serves as cofactor.

The protein resides in the plastid. It localises to the chloroplast thylakoid membrane. It carries out the reaction a plastoquinone + NADH + (n+1) H(+)(in) = a plastoquinol + NAD(+) + n H(+)(out). The catalysed reaction is a plastoquinone + NADPH + (n+1) H(+)(in) = a plastoquinol + NADP(+) + n H(+)(out). Its function is as follows. NDH shuttles electrons from NAD(P)H:plastoquinone, via FMN and iron-sulfur (Fe-S) centers, to quinones in the photosynthetic chain and possibly in a chloroplast respiratory chain. The immediate electron acceptor for the enzyme in this species is believed to be plastoquinone. Couples the redox reaction to proton translocation, and thus conserves the redox energy in a proton gradient. In Citrus sinensis (Sweet orange), this protein is NAD(P)H-quinone oxidoreductase subunit I, chloroplastic.